The chain runs to 95 residues: Co-chaperonin GroES (95 aa).

This sequence belongs to the GroES chaperonin family. As to quaternary structure, heptamer of 7 subunits arranged in a ring. Interacts with the chaperonin GroEL.

Its subcellular location is the cytoplasm. Functionally, together with the chaperonin GroEL, plays an essential role in assisting protein folding. The GroEL-GroES system forms a nano-cage that allows encapsulation of the non-native substrate proteins and provides a physical environment optimized to promote and accelerate protein folding. GroES binds to the apical surface of the GroEL ring, thereby capping the opening of the GroEL channel. The polypeptide is Co-chaperonin GroES (Desulfatibacillum aliphaticivorans).